The sequence spans 1084 residues: Ribonucleoside-diphosphate reductase NrdEB subunit alpha (1084 aa).

Substrate-binding positions include T152, S168–C169, and G197. A disulfide bridge connects residues C169 and C793. N379 serves as the catalytic Proton acceptor. C381 acts as the Cysteine radical intermediate in catalysis. The 152-residue stretch at I503–V654 folds into the DOD-type homing endonuclease domain. E768 acts as the Proton acceptor in catalysis. P964–I968 is a binding site for substrate.

It belongs to the ribonucleoside diphosphate reductase large chain family. Tetramer of two alpha and two beta subunits. This protein undergoes protein self-splicing that involves post-translational excision of the intervening region (intein) followed by peptide ligation.

The catalysed reaction is a 2'-deoxyribonucleoside 5'-diphosphate + [thioredoxin]-disulfide + H2O = a ribonucleoside 5'-diphosphate + [thioredoxin]-dithiol. Its activity is regulated as follows. Under complex allosteric control mediated by deoxynucleoside triphosphates and ATP binding. The type of nucleotide bound at the specificity site determines substrate preference. It seems probable that ATP makes the enzyme reduce CDP and UDP, dGTP favors ADP reduction and dTTP favors GDP reduction. Functionally, provides the precursors necessary for DNA synthesis. Catalyzes the biosynthesis of deoxyribonucleotides from the corresponding ribonucleotides. The sequence is that of Ribonucleoside-diphosphate reductase NrdEB subunit alpha (nrdEB) from Bacillus subtilis (strain 168).